We begin with the raw amino-acid sequence, 201 residues long: Recombination protein RecR (201 aa).

The C4-type zinc-finger motif lies at 60–75 (CSRCFHFTDAEECSIC). A Toprim domain is found at 83 to 178 (GEICVVETTA…RVSRIAYGIP (96 aa)).

The protein belongs to the RecR family.

Functionally, may play a role in DNA repair. It seems to be involved in an RecBC-independent recombinational process of DNA repair. It may act with RecF and RecO. This chain is Recombination protein RecR, found in Syntrophobacter fumaroxidans (strain DSM 10017 / MPOB).